The chain runs to 2472 residues: Spectrin alpha chain, non-erythrocytic 1 (2472 aa).

N-acetylmethionine is present on Met-1. Spectrin repeat units follow at residues 45–146 (RFQF…IKLL), 150–251 (KLVQ…QGKL), 256–358 (EVQR…ARLD), 361–465 (YRLQ…QYEQ), 468–570 (DLQL…AQLA), 574–676 (HLQQ…KLRE), 679–781 (QQQQ…QKLA), 785–888 (RLQQ…DLED), and 891–961 (QAQQ…QQVA). Ser-587 is subject to Phosphoserine. Lys-637 carries the post-translational modification N6-acetyllysine. Lys-803 carries the N6-acetyllysine modification. Residues Ser-924, Ser-982, Ser-999, Ser-1029, Ser-1031, and Ser-1041 each carry the phosphoserine modification. One can recognise an SH3 domain in the interval 967–1026 (TGKELVLALYDYQEKSPREVTMKKGDILTLLNSTNKDWWKVEVNDRQGFVPAAYVKKLDP). Residues 1096–1166 (LFREANELQQ…LESEGLMAEE (71 aa)) form a Spectrin 10 repeat. Residue Tyr-1176 is modified to Phosphotyrosine. Residues Ser-1190, Ser-1207, Ser-1217, Ser-1291, Ser-1306, Ser-1323, and Ser-1338 each carry the phosphoserine modification. The stretch at 1233 to 1336 (HEVQRFHRDA…RADQRKAKLG (104 aa)) is one Spectrin 11 repeat. Spectrin repeat units follow at residues 1339–1441 (HDLQ…RMML) and 1446–1549 (ELQL…KLGE). Lys-1519 is modified (N6-acetyllysine). Phosphoserine is present on residues Ser-1550, Ser-1557, Ser-1578, Ser-1615, and Ser-1647. 7 Spectrin repeats span residues 1552-1656 (TLQQ…KLKE), 1659-1762 (KQQN…KLSE), 1764-1868 (HRLH…RLEE), 1871-1974 (EYQQ…KLDE), 1978-2081 (FLQF…KLLE), 2092-2194 (LFLT…LELQ), and 2206-2310 (LRQE…NLEQ). Thr-2020 carries the post-translational modification Phosphothreonine. At Lys-2052 the chain carries N6-acetyllysine. At Thr-2066 the chain carries Phosphothreonine. 3 consecutive EF-hand domains span residues 2323–2358 (EALK…LGYD), 2366–2401 (EPDP…RETE), and 2404–2439 (KSSE…EQAD). Residues Asp-2336, Asp-2338, Ser-2340, Arg-2342, Glu-2347, Asp-2379, Asn-2381, Asp-2383, His-2385, and Glu-2390 each coordinate Ca(2+). The residue at position 2421 (Lys-2421) is an N6-acetyllysine.

The protein belongs to the spectrin family. As to quaternary structure, like erythrocyte spectrin, the spectrin-like proteins are capable of forming dimers which can further associate to tetramers. Interacts (via C-terminal spectrin repeats) with TRPC4. Interacts with CALM and EMD. Interacts with isoform 1 of ACP1. Identified in a complex with ACTN4, CASK, IQGAP1, MAGI2, NPHS1 and SPTBN1. Interacts with SHANK3 (via ANK repeats). Interacts with CLN3; this interaction regulates the fodrin localization at the plasma membrane. In terms of processing, phosphorylation of Tyr-1176 decreases sensitivity to cleavage by calpain in vitro. Expressed in the foot process layer of podocytes in the kidney glomerulus and in tubules (at protein level).

The protein resides in the cytoplasm. It localises to the cytoskeleton. It is found in the cell cortex. Functionally, fodrin, which seems to be involved in secretion, interacts with calmodulin in a calcium-dependent manner and is thus candidate for the calcium-dependent movement of the cytoskeleton at the membrane. The sequence is that of Spectrin alpha chain, non-erythrocytic 1 (Sptan1) from Rattus norvegicus (Rat).